The primary structure comprises 62 residues: Large ribosomal subunit protein uL30 (62 aa).

The protein belongs to the universal ribosomal protein uL30 family. In terms of assembly, part of the 50S ribosomal subunit.

The polypeptide is Large ribosomal subunit protein uL30 (Roseobacter denitrificans (strain ATCC 33942 / OCh 114) (Erythrobacter sp. (strain OCh 114))).